The following is a 362-amino-acid chain: tRNA/tmRNA (uracil-C(5))-methyltransferase (362 aa).

S-adenosyl-L-methionine-binding residues include glutamine 182, tyrosine 210, asparagine 215, glutamate 231, and aspartate 293. Catalysis depends on cysteine 318, which acts as the Nucleophile. Residue glutamate 352 is the Proton acceptor of the active site.

It belongs to the class I-like SAM-binding methyltransferase superfamily. RNA M5U methyltransferase family. TrmA subfamily.

It carries out the reaction uridine(54) in tRNA + S-adenosyl-L-methionine = 5-methyluridine(54) in tRNA + S-adenosyl-L-homocysteine + H(+). The enzyme catalyses uridine(341) in tmRNA + S-adenosyl-L-methionine = 5-methyluridine(341) in tmRNA + S-adenosyl-L-homocysteine + H(+). Its function is as follows. Dual-specificity methyltransferase that catalyzes the formation of 5-methyluridine at position 54 (m5U54) in all tRNAs, and that of position 341 (m5U341) in tmRNA (transfer-mRNA). This is tRNA/tmRNA (uracil-C(5))-methyltransferase from Neisseria meningitidis serogroup A / serotype 4A (strain DSM 15465 / Z2491).